A 325-amino-acid chain; its full sequence is LIM and senescent cell antigen-like-containing domain protein 1 (325 aa).

A2 bears the N-acetylalanine mark. 5 LIM zinc-binding domains span residues 10–62, 71–121, 135–184, 193–243, and 252–303; these read CERC…CEHD, CHQC…CRPC, CQKC…CLPC, CGAC…CETH, and CFHC…CKKC.

Component of the heterotrimeric IPP (ILK-PINCH-PARVIN) complex composed of ILK, LIMS1/PINCH and PARVA; the complex binds to F-actin via the C-terminal tail of LIMS1 and the N-terminal region of PARVA, promoting F-actin filament bundling. Formation of the IPP complex is dependent on protein kinase C and precedes integrin-mediated cell adhesion and spreading. Competes with LIMS2 for interaction with ILK. Interacts with SH3/SH2 adapter NCK2, thereby linking the complex to cell surface receptors. Interacts (via LIM zinc-binding 5) with TGFB1I1.

The protein localises to the cell junction. It localises to the focal adhesion. The protein resides in the cell membrane. Its function is as follows. Within the IPP (ILK-PINCH-PARVIN) complex, binds to F-actin, promoting F-actin bundling, a process required to generate force for actin cytoskeleton reorganization and subsequent dynamic cell adhesion events such as cell spreading and migration. The polypeptide is LIM and senescent cell antigen-like-containing domain protein 1 (Lims1) (Mus musculus (Mouse)).